The chain runs to 509 residues: Probable aspartic-type endopeptidase CTSD (509 aa).

An N-terminal signal peptide occupies residues 1-21 (MQFLWLCLLSAVTLQFTGTLA). The Peptidase A1 domain occupies 102-408 (YFSEVKVGSE…DFDKNRVGLA (307 aa)). The active site involves Asp120. Residue Asn174 is glycosylated (N-linked (GlcNAc...) asparagine). Residue Asp302 is part of the active site. Residue Asn361 is glycosylated (N-linked (GlcNAc...) asparagine). The disordered stretch occupies residues 451-489 (NKAPSGGSPGLPAESGSDSTTNGEATNGATSSPNSSSSV). Residues 466–480 (GSDSTTNGEATNGAT) are compositionally biased toward polar residues. A glycan (N-linked (GlcNAc...) asparagine) is linked at Asn484. Ser485 carries GPI-anchor amidated serine lipidation. Positions 486 to 509 (SSSVLTPTWLTLAVFFAIGSSLWS) are cleaved as a propeptide — removed in mature form.

The protein belongs to the peptidase A1 family.

It is found in the cell membrane. In terms of biological role, probable GPI-anchored aspartic-type endopeptidase which contributes to virulence. In Trichophyton verrucosum (strain HKI 0517), this protein is Probable aspartic-type endopeptidase CTSD (CTSD).